We begin with the raw amino-acid sequence, 209 residues long: Pyridoxine/pyridoxamine 5'-phosphate oxidase (209 aa).

Substrate is bound by residues arginine 5–tyrosine 8 and lysine 63. FMN is bound by residues arginine 58–lysine 63, phenylalanine 73–threonine 74, arginine 79, lysine 80, and glutamine 102. 3 residues coordinate substrate: tyrosine 120, arginine 124, and serine 128. FMN-binding positions include glutamine 137 to serine 138 and tryptophan 181. Arginine 187–histidine 189 contacts substrate. Position 191 (arginine 191) interacts with FMN.

The protein belongs to the pyridoxamine 5'-phosphate oxidase family. Homodimer. FMN serves as cofactor.

The enzyme catalyses pyridoxamine 5'-phosphate + O2 + H2O = pyridoxal 5'-phosphate + H2O2 + NH4(+). The catalysed reaction is pyridoxine 5'-phosphate + O2 = pyridoxal 5'-phosphate + H2O2. It participates in cofactor metabolism; pyridoxal 5'-phosphate salvage; pyridoxal 5'-phosphate from pyridoxamine 5'-phosphate: step 1/1. Its pathway is cofactor metabolism; pyridoxal 5'-phosphate salvage; pyridoxal 5'-phosphate from pyridoxine 5'-phosphate: step 1/1. Functionally, catalyzes the oxidation of either pyridoxine 5'-phosphate (PNP) or pyridoxamine 5'-phosphate (PMP) into pyridoxal 5'-phosphate (PLP). In Alcanivorax borkumensis (strain ATCC 700651 / DSM 11573 / NCIMB 13689 / SK2), this protein is Pyridoxine/pyridoxamine 5'-phosphate oxidase.